Consider the following 748-residue polypeptide: 5-methyltetrahydropteroyltriglutamate--homocysteine methyltransferase (748 aa).

5-methyltetrahydropteroyltri-L-glutamate-binding positions include 18–21 (REWK) and Lys-112. L-homocysteine-binding positions include 420 to 422 (IGS) and Glu-473. L-methionine-binding positions include 420–422 (IGS) and Glu-473. Trp-550 lines the 5-methyltetrahydropteroyltri-L-glutamate pocket. Asp-588 is a binding site for L-homocysteine. Asp-588 contacts L-methionine. Glu-594 provides a ligand contact to 5-methyltetrahydropteroyltri-L-glutamate. Residues His-630, Cys-632, and Glu-654 each coordinate Zn(2+). His-683 functions as the Proton donor in the catalytic mechanism. Cys-715 is a Zn(2+) binding site.

Belongs to the vitamin-B12 independent methionine synthase family. Zn(2+) serves as cofactor.

It carries out the reaction 5-methyltetrahydropteroyltri-L-glutamate + L-homocysteine = tetrahydropteroyltri-L-glutamate + L-methionine. The protein operates within amino-acid biosynthesis; L-methionine biosynthesis via de novo pathway; L-methionine from L-homocysteine (MetE route): step 1/1. Functionally, catalyzes the transfer of a methyl group from 5-methyltetrahydrofolate to homocysteine resulting in methionine formation. This is 5-methyltetrahydropteroyltriglutamate--homocysteine methyltransferase from Staphylococcus epidermidis (strain ATCC 12228 / FDA PCI 1200).